Consider the following 126-residue polypeptide: Large ribosomal subunit protein uL29 (126 aa).

The protein belongs to the universal ribosomal protein uL29 family.

The chain is Large ribosomal subunit protein uL29 (rpl35) from Dictyostelium discoideum (Social amoeba).